The sequence spans 618 residues: Leucine aminopeptidase 2 (618 aa).

Residues 139–141 (QCQ) and 271–276 (PYGGME) each bind a peptide. Position 300 (histidine 300) interacts with Zn(2+). Residue glutamate 301 is the Proton acceptor of the active site. Histidine 304 and glutamate 323 together coordinate Zn(2+). Tyrosine 388 functions as the Proton donor in the catalytic mechanism.

This sequence belongs to the peptidase M1 family. Zn(2+) serves as cofactor.

It localises to the cytoplasm. It is found in the nucleus. It carries out the reaction an epoxide + H2O = an ethanediol. In terms of biological role, aminopeptidase that preferentially cleaves di- and tripeptides. Also has low epoxide hydrolase activity (in vitro). Can hydrolyze the epoxide leukotriene LTA(4) but it forms preferentially 5,6-dihydroxy-7,9,11,14-eicosatetraenoic acid rather than the cytokine leukotriene B(4) as the product compared to the homologous mammalian enzyme (in vitro). This Aspergillus niger (strain ATCC MYA-4892 / CBS 513.88 / FGSC A1513) protein is Leucine aminopeptidase 2.